The following is a 182-amino-acid chain: Biotin transporter BioY2 (182 aa).

Helical transmembrane passes span 12–32 (IALG…IGIV), 54–74 (FFAI…FTGG), 78–98 (IAVL…MGTL), 111–131 (IPAF…GTLW), and 150–170 (PFVF…LALI).

It belongs to the BioY family. As to quaternary structure, in E.coli forms a stable energy-coupling factor (ECF) transporter complex composed of 2 membrane-embedded substrate-binding protein (S component), 2 ATP-binding proteins (A and A' components) and 2 transmembrane proteins (T component), probably with a stoichiometry of 2:1:1:2. May be able to interact with more than 1 S component at a time.

The protein resides in the cell membrane. In terms of biological role, probably a biotin-binding protein that interacts with the energy-coupling factor (ECF) ABC-transporter complex. Unlike classic ABC transporters this ECF transporter provides the energy necessary to transport a number of different substrates. The substrates themselves are bound by transmembrane, not extracytoplasmic soluble proteins. The protein is Biotin transporter BioY2 (bioY2) of Lactococcus lactis subsp. cremoris (strain MG1363).